A 363-amino-acid chain; its full sequence is Peptide chain release factor 1 (363 aa).

The residue at position 236 (Q236) is an N5-methylglutamine. The segment at 286-305 is disordered; sequence KKEMERSTMRKSQIGSGDRS.

The protein belongs to the prokaryotic/mitochondrial release factor family. In terms of processing, methylated by PrmC. Methylation increases the termination efficiency of RF1.

The protein localises to the cytoplasm. Its function is as follows. Peptide chain release factor 1 directs the termination of translation in response to the peptide chain termination codons UAG and UAA. The polypeptide is Peptide chain release factor 1 (Wolbachia pipientis subsp. Culex pipiens (strain wPip)).